A 572-amino-acid chain; its full sequence is Proline--tRNA ligase (572 aa).

This sequence belongs to the class-II aminoacyl-tRNA synthetase family. ProS type 1 subfamily. In terms of assembly, homodimer.

It localises to the cytoplasm. The enzyme catalyses tRNA(Pro) + L-proline + ATP = L-prolyl-tRNA(Pro) + AMP + diphosphate. Functionally, catalyzes the attachment of proline to tRNA(Pro) in a two-step reaction: proline is first activated by ATP to form Pro-AMP and then transferred to the acceptor end of tRNA(Pro). As ProRS can inadvertently accommodate and process non-cognate amino acids such as alanine and cysteine, to avoid such errors it has two additional distinct editing activities against alanine. One activity is designated as 'pretransfer' editing and involves the tRNA(Pro)-independent hydrolysis of activated Ala-AMP. The other activity is designated 'posttransfer' editing and involves deacylation of mischarged Ala-tRNA(Pro). The misacylated Cys-tRNA(Pro) is not edited by ProRS. The protein is Proline--tRNA ligase of Hydrogenovibrio crunogenus (strain DSM 25203 / XCL-2) (Thiomicrospira crunogena).